A 2052-amino-acid chain; its full sequence is Unconventional myosin-X (2052 aa).

N-acetylmethionine is present on M1. The Myosin motor domain occupies 63-739 (EGVDDMATLT…LEQKLEKRQE (677 aa)). ATP is bound by residues N104, Y113, 160–165 (GAGKTE), and N215. The segment at 619-641 (LHSLMATLSASNPFFVRCIKPNM) is actin-binding. IQ domains lie at 742–763 (VTRA…KQYK), 764–787 (KVLD…RFLH), and 788–817 (LKKA…EKRA). The tract at residues 814–884 (EKRAEEEKRK…LSRELEKQKE (71 aa)) is SAH. The tract at residues 819-843 (EEKRKREEEEKRKREEEERERERER) is disordered. Residues 885–935 (NKQVEEILRLEKEIEDLQRMKERQELSLTEASLQKLQQLRDEELRRLEDEA) adopt a coiled-coil conformation. A phosphoserine mark is found at S963 and S966. The interval 964-1093 (VGSGCTGEQG…DYDQDDYEDG (130 aa)) is disordered. Residues 988-1003 (PEEEEVDEGFEADDDA) are compositionally biased toward acidic residues. The segment covering 1040–1049 (VVPTSPSADS) has biased composition (polar residues). Over residues 1081–1092 (GDYDYDQDDYED) the composition is skewed to acidic residues. Phosphothreonine is present on T1152. PH domains follow at residues 1206 to 1304 (EALK…QVHA) and 1386 to 1491 (EFIV…NVTD). The MyTH4 domain maps to 1541 to 1689 (LPYGDINLNL…PSRDEIEALI (149 aa)). Residues 1694–2038 (MTSTVHCHGG…AYISMIVKKR (345 aa)) enclose the FERM domain.

It belongs to the TRAFAC class myosin-kinesin ATPase superfamily. Myosin family. Monomer, when in an inactive conformation in the cytosol. Homodimer in its active, membrane-bound conformation; antiparallel coiled coil-mediated dimer formation. Interacts with ECPAS. Interacts with NEO 1. Interacts with VASP. Interacts with DCC and ITGB5; the presence of DCC inhibits ITGB5 binding. Interacts with tubulin; ITGB5 or DCC binding inhibits tubulin binding. Interacts strongly with CALM3 and weakly with CALM, the CALM3 interaction is essential for function in filopodial extension and motility. Interacts with ITGB1, ITGB3 and ITGB5. As to expression, detected in kidney, testis, liver, kidney, cerebellum and brain cortex (at protein level).

Its subcellular location is the cytoplasm. The protein resides in the cytosol. It localises to the cell projection. It is found in the lamellipodium. The protein localises to the ruffle. Its subcellular location is the cytoskeleton. The protein resides in the filopodium tip. It localises to the cell cortex. It is found in the filopodium membrane. In terms of biological role, myosins are actin-based motor molecules with ATPase activity. Unconventional myosins serve in intracellular movements. MYO10 binds to actin filaments and actin bundles and functions as a plus end-directed motor. Moves with higher velocity and takes larger steps on actin bundles than on single actin filaments. The tail domain binds to membranous compartments containing phosphatidylinositol 3,4,5-trisphosphate, which are then moved relative to actin filaments. Regulates cell shape, cell spreading and cell adhesion. Stimulates the formation and elongation of filopodia. In hippocampal neurons it induces the formation of dendritic filopodia by trafficking the actin-remodeling protein VASP to the tips of filopodia, where it promotes actin elongation. Plays a role in formation of the podosome belt in osteoclasts. The sequence is that of Unconventional myosin-X (MYO10) from Bos taurus (Bovine).